We begin with the raw amino-acid sequence, 483 residues long: Ero1-like protein (483 aa).

The N-terminal stretch at 1–29 (MTTRTVQRNLWASAAVVLVLLLLWTDTTG) is a signal peptide. Disulfide bonds link Cys44/Cys57, Cys46/Cys55, Cys94/Cys402, Cys103/Cys108, Cys227/Cys251, and Cys405/Cys408. FAD contacts are provided by Arg206, Thr208, and Trp219. An N-linked (GlcNAc...) asparagine glycan is attached at Asn232. Positions 262, 265, and 301 each coordinate FAD. An N-linked (GlcNAc...) asparagine glycan is attached at Asn395.

Belongs to the EROs family. As to quaternary structure, may function both as a monomer and a homodimer. The cofactor is FAD.

The protein resides in the endoplasmic reticulum membrane. In terms of biological role, oxidoreductase involved in disulfide bond formation in the endoplasmic reticulum. Efficiently reoxidizes pdi-1, the enzyme catalyzing protein disulfide formation, in order to allow pdi-1 to sustain additional rounds of disulfide formation. Following pdi reoxidation, passes its electrons to molecular oxygen via FAD, leading to the production of reactive oxygen species (ROS) in the cell. This is Ero1-like protein (Ero1L) from Drosophila melanogaster (Fruit fly).